The primary structure comprises 185 residues: Elongation factor P (185 aa).

This sequence belongs to the elongation factor P family.

The protein localises to the cytoplasm. The protein operates within protein biosynthesis; polypeptide chain elongation. Its function is as follows. Involved in peptide bond synthesis. Stimulates efficient translation and peptide-bond synthesis on native or reconstituted 70S ribosomes in vitro. Probably functions indirectly by altering the affinity of the ribosome for aminoacyl-tRNA, thus increasing their reactivity as acceptors for peptidyl transferase. In Dictyoglomus thermophilum (strain ATCC 35947 / DSM 3960 / H-6-12), this protein is Elongation factor P.